A 511-amino-acid polypeptide reads, in one-letter code: V-type proton ATPase subunit B, brain isoform (511 aa).

Arginine 400 is an ATP binding site.

This sequence belongs to the ATPase alpha/beta chains family. As to quaternary structure, V-ATPase is a heteromultimeric enzyme made up of two complexes: the ATP-hydrolytic V1 complex and the proton translocation V0 complex. The V1 complex consists of three catalytic AB heterodimers that form a heterohexamer, three peripheral stalks each consisting of EG heterodimers, one central rotor including subunits D and F, and the regulatory subunits C and H. The proton translocation complex V0 consists of the proton transport subunit a, a ring of proteolipid subunits c9c'', rotary subunit d, subunits e and f, and the accessory subunits ATP6AP1/Ac45 and ATP6AP2/PRR. As to expression, expressed in brain (at protein level). Expressed in all tissues tested, but highest in brain and in adrenal medulla.

It is found in the apical cell membrane. It localises to the melanosome. The protein localises to the cytoplasm. The protein resides in the cytoplasmic vesicle. Its subcellular location is the clathrin-coated vesicle membrane. It is found in the secretory vesicle. It localises to the synaptic vesicle membrane. In terms of biological role, non-catalytic subunit of the V1 complex of vacuolar(H+)-ATPase (V-ATPase), a multisubunit enzyme composed of a peripheral complex (V1) that hydrolyzes ATP and a membrane integral complex (V0) that translocates protons. V-ATPase is responsible for acidifying and maintaining the pH of intracellular compartments and in some cell types, is targeted to the plasma membrane, where it is responsible for acidifying the extracellular environment. In renal intercalated cells, can partially compensate the lack of ATP6V1B1 and mediate secretion of protons (H+) into the urine under base-line conditions but not in conditions of acid load. This chain is V-type proton ATPase subunit B, brain isoform (ATP6V1B2), found in Bos taurus (Bovine).